Reading from the N-terminus, the 432-residue chain is D-amino acid dehydrogenase (432 aa).

3–17 serves as a coordination point for FAD; it reads VVILGSGVVGVASAW.

The protein belongs to the DadA oxidoreductase family. It depends on FAD as a cofactor.

The catalysed reaction is a D-alpha-amino acid + A + H2O = a 2-oxocarboxylate + AH2 + NH4(+). It functions in the pathway amino-acid degradation; D-alanine degradation; NH(3) and pyruvate from D-alanine: step 1/1. Its function is as follows. Oxidative deamination of D-amino acids. This is D-amino acid dehydrogenase from Klebsiella pneumoniae (strain 342).